The sequence spans 268 residues: Phosphatidylglycerol--prolipoprotein diacylglyceryl transferase (268 aa).

Transmembrane regions (helical) follow at residues 27 to 47, 66 to 86, 104 to 124, 130 to 150, 181 to 201, 208 to 228, and 242 to 262; these read PALRWYGFTYLVGFVAAMWLL, LLFYGFLGVILGGRIGYVLFY, GGMSFHGGLMGVITAMIYIAW, FFAVADMVAPVVPIGLGAGRI, PSQLYQFALEGVALFLLLYWF, VGAVSGMFLLGYGIFRVIVET, and FMTMGQILSVPMVLFGLYLIL. Residue R149 coordinates a 1,2-diacyl-sn-glycero-3-phospho-(1'-sn-glycerol).

The protein belongs to the Lgt family.

It localises to the cell inner membrane. The catalysed reaction is L-cysteinyl-[prolipoprotein] + a 1,2-diacyl-sn-glycero-3-phospho-(1'-sn-glycerol) = an S-1,2-diacyl-sn-glyceryl-L-cysteinyl-[prolipoprotein] + sn-glycerol 1-phosphate + H(+). Its pathway is protein modification; lipoprotein biosynthesis (diacylglyceryl transfer). Catalyzes the transfer of the diacylglyceryl group from phosphatidylglycerol to the sulfhydryl group of the N-terminal cysteine of a prolipoprotein, the first step in the formation of mature lipoproteins. In Shewanella sp. (strain MR-4), this protein is Phosphatidylglycerol--prolipoprotein diacylglyceryl transferase.